The primary structure comprises 411 residues: Serpin A3-2 (411 aa).

A signal peptide spans 1–24 (MRAERTSFLLALGLLVAGIRSVHC). N-linked (GlcNAc...) asparagine glycans are attached at residues Asn-100, Asn-180, Asn-230, and Asn-264.

The protein belongs to the serpin family. Homodimer.

It is found in the cytoplasmic vesicle. The protein localises to the secretory vesicle. Its subcellular location is the chromaffin granule. It localises to the secreted. In terms of biological role, serine protease inhibitor. The sequence is that of Serpin A3-2 from Bos taurus (Bovine).